Consider the following 436-residue polypeptide: C4-dicarboxylate transport protein 2 (436 aa).

9 consecutive transmembrane segments (helical) span residues 14 to 34 (VLVAIAIGIALGHWYPETAVA), 45 to 65 (LIKMAIAPIIFCTVVTGIAGM), 77 to 97 (MALLYFEIVSTVALIIGLVVV), 142 to 162 (VVGAFANGDILQVLFFSVLFG), 198 to 218 (PIGAFGAMAFTIGAYGVGSLV), 223 to 243 (LMLCFYITCLLFVLIVLGGIA), 290 to 310 (VVGLVIPTGYSFNLDGTSIYL), 331 to 351 (ITLLLVLLIASKGAAGVTGSG), and 353 to 373 (IVLAATLSAVGHLPVAGLALI). Residues 414 to 436 (ELAGEGNASSPASDIPVGGREAV) form a disordered region.

It belongs to the dicarboxylate/amino acid:cation symporter (DAACS) (TC 2.A.23) family.

The protein localises to the cell inner membrane. Responsible for the transport of dicarboxylates such as succinate, fumarate, and malate from the periplasm across the membrane. The protein is C4-dicarboxylate transport protein 2 of Pseudomonas paraeruginosa (strain DSM 24068 / PA7) (Pseudomonas aeruginosa (strain PA7)).